Reading from the N-terminus, the 1034-residue chain is Receptor-type guanylate cyclase gcy-25 (1034 aa).

The first 16 residues, 1–16 (MLLLLLLLKISTFVDS), serve as a signal peptide directing secretion. At 17–409 (FQIGHLEFEN…YDNNLCSDFH (393 aa)) the chain is on the extracellular side. N-linked (GlcNAc...) asparagine glycans are attached at residues N28, N224, N301, N308, and N373. Residues 410-430 (VFMIAAIVFSILLIPMAIAFY) form a helical membrane-spanning segment. At 431 to 1034 (LQRKEHLIQQ…DNSKKMFLNV (604 aa)) the chain is on the cytoplasmic side. Positions 464-749 (RVSTISTARA…KITDAVNREF (286 aa)) constitute a Protein kinase domain. Residues 470-478 (TARASYSSI) and K497 contribute to the ATP site. Residues 758–785 (IDQMIEMIDEYSANLEQIVAERTRELEQ) are a coiled coil. The region spanning 821–951 (TLLVVDVCQF…DTVNMACRMA (131 aa)) is the Guanylate cyclase domain.

Belongs to the adenylyl cyclase class-4/guanylyl cyclase family. Expressed in AQR, PQR and URX sensory neurons.

Its subcellular location is the cell membrane. The enzyme catalyses GTP = 3',5'-cyclic GMP + diphosphate. Guanylate cyclase involved in the production of the second messenger cGMP. The polypeptide is Receptor-type guanylate cyclase gcy-25 (Caenorhabditis elegans).